The chain runs to 543 residues: MSAKDVKFDTAARSRMLRGVNTLADAVKVTLGPKGRNVVIDKSFGAPRITKDGVTVAKEIELEDKFENMGAQMVKEVASRTNDQAGDGTTTSTVLAQAIVNEGMKAVAAGMNPMDLKRGIDLATSKVVEAIKAAARDVKDSDEVAQVGTISANGEAEIGRQIADAMQKVGNDGVITVEENKGLETETEVVEGMQFDRGYLSPYFVTNPDKMTAELEDPFILIHEKKLSSLQPLVPLLESIIQAGKPLLVIAEDVEGEALATLVVNKLRGGLKIAAVKAPGFGDRRKAMLQDIAILTGGQVISEDLGMKLESVTIDMLGTAKKVAITKDETTVVNGAGEKAEIDARVSQIRTQIEETTSDYDREKLQERVAKLAGGVAVIRVGGMTEVEVKERKDRVDDALNATRAAVQEGIVVGGGVALVQGAKALDGLQGANPDQNAGIAIVRRALEAPLRQIAENAGVDGSVVAGKIRESDDATFGFNAQTEEYGDLFSFGVIDPAKVVRTALEDASSVAGLLITTEAMVAVKPAGKGAASPAMPDMGGMM.

ATP is bound by residues 30–33 (TLGP), Lys-51, 87–91 (DGTTT), Gly-415, and Asp-496.

This sequence belongs to the chaperonin (HSP60) family. In terms of assembly, forms a cylinder of 14 subunits composed of two heptameric rings stacked back-to-back. Interacts with the co-chaperonin GroES.

Its subcellular location is the cytoplasm. It catalyses the reaction ATP + H2O + a folded polypeptide = ADP + phosphate + an unfolded polypeptide.. Together with its co-chaperonin GroES, plays an essential role in assisting protein folding. The GroEL-GroES system forms a nano-cage that allows encapsulation of the non-native substrate proteins and provides a physical environment optimized to promote and accelerate protein folding. In Roseobacter denitrificans (strain ATCC 33942 / OCh 114) (Erythrobacter sp. (strain OCh 114)), this protein is Chaperonin GroEL 1.